The sequence spans 184 residues: NADH-quinone oxidoreductase subunit B (184 aa).

Residues Cys37, Cys38, Cys103, and Cys132 each coordinate [4Fe-4S] cluster.

This sequence belongs to the complex I 20 kDa subunit family. As to quaternary structure, NDH-1 is composed of 14 different subunits. Subunits NuoB, C, D, E, F, and G constitute the peripheral sector of the complex. Requires [4Fe-4S] cluster as cofactor.

It is found in the cell membrane. The catalysed reaction is a quinone + NADH + 5 H(+)(in) = a quinol + NAD(+) + 4 H(+)(out). In terms of biological role, NDH-1 shuttles electrons from NADH, via FMN and iron-sulfur (Fe-S) centers, to quinones in the respiratory chain. The immediate electron acceptor for the enzyme in this species is believed to be a menaquinone. Couples the redox reaction to proton translocation (for every two electrons transferred, four hydrogen ions are translocated across the cytoplasmic membrane), and thus conserves the redox energy in a proton gradient. The chain is NADH-quinone oxidoreductase subunit B from Rhodococcus jostii (strain RHA1).